The sequence spans 548 residues: Sesquiterpene synthase 9 (548 aa).

D300, D304, and E453 together coordinate Mg(2+). The short motif at D300–D304 is the DDXXD motif element.

Belongs to the terpene synthase family. Tpsa subfamily. Mg(2+) serves as cofactor. Requires Mn(2+) as cofactor. In terms of tissue distribution, mostly expressed in stem and trichomes, to a lower extent in roots, leaves and flowers and, at low levels, in fruits.

The protein resides in the cytoplasm. The enzyme catalyses (2E,6E)-farnesyl diphosphate = germacrene C + diphosphate. It catalyses the reaction (2E)-geranyl diphosphate = terpinolene + diphosphate. It carries out the reaction (2E)-geranyl diphosphate = limonene + diphosphate. The catalysed reaction is (2E)-geranyl diphosphate = beta-myrcene + diphosphate. The enzyme catalyses (2Z,6Z)-farnesyl diphosphate = germacrene C + diphosphate. It functions in the pathway secondary metabolite biosynthesis; terpenoid biosynthesis. Involved in the biosynthesis of germacrene C, one of the most abundant sesquiterpene in the leaf oil of tomato. Produces mainly germacrene C, but also smaller amounts of germacrene A, B and D when used with farnesyl diphosphate (FPP) as substrate; able to use both (2E,6E)-farnesyl diphosphate ((EE)-FPP) and (2Z,6Z)-farnesyl diphosphate ((ZZ)-FPP). No or low activity with geranylgeranyl diphosphate (GGPP). Can act with a low efficiency as a monoterpene synthase with geranyl diphosphate (GPP) as substrate, thus producing beta-myrcene, limonene and terpinolene. The protein is Sesquiterpene synthase 9 of Solanum lycopersicum (Tomato).